The primary structure comprises 582 residues: NAB transcription cofactor mab-10 (582 aa).

The span at 1–70 (MSSSSSSSLP…SSSSQRQSTS (70 aa)) shows a compositional bias: low complexity. Disordered stretches follow at residues 1-84 (MSSS…MPTP), 257-287 (SDQQSSSTSSVRSVLPSTSSNTSHPELPAGI), 333-365 (PPSSTSIQQPSTSFGRSSSITGQEKEGSSSPFL), and 516-582 (SRKR…LPES). The interval 83–161 (TPTTLSEWQL…EYSQDQTAFN (79 aa)) is NCD1. Low complexity-rich tracts occupy residues 257–276 (SDQQSSSTSSVRSVLPSTSS) and 333–345 (PPSSTSIQQPSTS). Residues 396 to 519 (LSTAQISRLA…GYNYAKSRKR (124 aa)) form an NCD2 region. Residues 573–582 (EKMKGELPES) are compositionally biased toward basic and acidic residues.

The protein belongs to the NAB family. As to quaternary structure, interacts with transcription factor lin-29 (via C-terminus).

The protein resides in the nucleus. Its function is as follows. Transcriptional cofactor. Heterochronic protein, involved in timing of a subset of differentiation events during the larval-to-adult transition. Promotes hypodermal terminal differentiation, together with transcription factor lin-29, perhaps as part of a transcriptional complex. Involved in regulating molting by repressing the expression of nuclear hormone receptors nhr-23 and nhr-25 in the adult hypoderm, probably acting in concert with lin-29. The protein is NAB transcription cofactor mab-10 of Caenorhabditis elegans.